We begin with the raw amino-acid sequence, 456 residues long: Iroquois-class homeodomain protein irx-2 (456 aa).

Residues 110-172 (DPAYRKNATR…NARRRLKKEN (63 aa)) constitute a DNA-binding region (homeobox; TALE-type). 3 disordered regions span residues 172-214 (NKMT…AEDE), 246-320 (CESG…PASK), and 434-456 (RPTN…QPYP). Composition is skewed to basic and acidic residues over residues 192-205 (GERV…KAQD) and 246-256 (CESGSESKEKY). Residues 257–269 (DDDEDEEEGDEED) show a composition bias toward acidic residues. Over residues 291 to 318 (NHQQDGSPRNSNKTSLDNGMSPSSQTPA) the composition is skewed to polar residues.

Belongs to the TALE/IRO homeobox family. As to expression, expressed in the neural plate in overlapping patterns with other irx members, which all share an anterior border of expression. Also expressed in the placodes. Broadly expressed in the tailbud rhombencephalon (hindbrain). Outside the nervous system and at tailbud stages, expressed in the developing otic vesicle, branchial arches, prospective heart region and pronephros.

The protein localises to the nucleus. Its function is as follows. Acts partially redundantly with other irx members in neural patterning. Required for formation of the posterior forebrain, midbrain, hindbrain, and to a lesser extent, spinal cord. Acts early in neural plate development to induce expression of some but not all proneural genes, and specify a neural precursor state. Also up-regulates repressors that prevent neuronal differentiation. Patterns the neuroectoderm in both the anterior/posterior and dorsal/ventral axes. Probably dispensable for pronephric kidney development. This is Iroquois-class homeodomain protein irx-2 from Xenopus tropicalis (Western clawed frog).